Here is a 296-residue protein sequence, read N- to C-terminus: 33 kDa chaperonin (296 aa).

2 disulfides stabilise this stretch: Cys-236/Cys-238 and Cys-269/Cys-272.

The protein belongs to the HSP33 family. Post-translationally, under oxidizing conditions two disulfide bonds are formed involving the reactive cysteines. Under reducing conditions zinc is bound to the reactive cysteines and the protein is inactive.

The protein resides in the cytoplasm. In terms of biological role, redox regulated molecular chaperone. Protects both thermally unfolding and oxidatively damaged proteins from irreversible aggregation. Plays an important role in the bacterial defense system toward oxidative stress. This Lactobacillus acidophilus (strain ATCC 700396 / NCK56 / N2 / NCFM) protein is 33 kDa chaperonin.